The primary structure comprises 792 residues: Cis-abienol synthase, chloroplastic (792 aa).

The transit peptide at 1-37 (MVLGLRSKIIPLPDHKLGNIKLGSVTNAICHRPCRVR) directs the protein to the chloroplast. Mg(2+) is bound by residues Asp-539, Asp-543, Asn-684, and Glu-692. The DDXXD motif motif lies at 539 to 543 (DDFFD).

The protein belongs to the terpene synthase family. Mg(2+) serves as cofactor. As to expression, expressed specifically in trichomes.

Its subcellular location is the plastid. It is found in the chloroplast. The catalysed reaction is 8-hydroxycopalyl diphosphate = cis-abienol + diphosphate. It functions in the pathway secondary metabolite biosynthesis; terpenoid biosynthesis. Functionally, involved in the biosynthesis of cis-abienol, a labdane diterpene that can be used as synthesis precursor of ambergris substitution fragance products. The sequence is that of Cis-abienol synthase, chloroplastic from Nicotiana tabacum (Common tobacco).